The sequence spans 38 residues: Large ribosomal subunit protein bL36 (38 aa).

Belongs to the bacterial ribosomal protein bL36 family.

The polypeptide is Large ribosomal subunit protein bL36 (Lactobacillus johnsonii (strain CNCM I-12250 / La1 / NCC 533)).